A 320-amino-acid polypeptide reads, in one-letter code: RNA-binding protein Musashi homolog 1 (320 aa).

Residues M1–T14 show a composition bias toward low complexity. Residues M1–F48 are disordered. The residue at position 18 (T18) is a Phosphothreonine. Residues S19 and S34 each carry the phosphoserine modification. Residues D23–S38 show a composition bias toward basic and acidic residues. 2 consecutive RRM domains span residues G45 to R124 and K134 to P211. Required for binding to target mRNAs stretches follow at residues F88–F93 and F177–F182.

The protein belongs to the Musashi family. In terms of tissue distribution, expressed in the gut and in AVA, AFD, RMD, RMED, RMEV, RMER and RMEL neurons (at protein level). In the tail expressed in neurons and all the ray sensilla. Expressed in male specific C1-C4 neurons.

Its subcellular location is the cytoplasm. The protein resides in the perikaryon. Its function is as follows. RNA binding protein that regulates the expression of target mRNAs at the translation level. Binds RNA containing the 5'-[GA]U(1-3)AGU-3' motif located in the 3' UTR of the target mRNA. Binds to the mRNA of three Arp2/3 complex components arx-1, arx-2 and arx-3 and negatively regulates their translation during association learning. Plays a role in time-dependent memory loss and the retention of conditioned behavior over time, probably through negative regulation of the Arp2/3 actin cytoskeleton branching complex and regulation of synapse size. Required for two aspects of male mating behavior: turning around the hermaphrodite head or tail and vulva location. This Caenorhabditis elegans protein is RNA-binding protein Musashi homolog 1.